A 354-amino-acid polypeptide reads, in one-letter code: Myosin-binding protein H-like (354 aa).

The tract at residues 1–47 (MEAATAPEVAAGSKLKVKEASPADAEPPQASPGQGAGSPTPQLLPPI) is disordered. Position 38 is a phosphoserine (Ser38). The 95-residue stretch at 45–139 (PPIEEHPKIW…GGLEATATID (95 aa)) folds into the Ig-like C2-type 1 domain. Positions 148-238 (PPQSIKLVDV…ETAPITTDLA (91 aa)) constitute a Fibronectin type-III domain. The Ig-like C2-type 2 domain maps to 261–345 (PKFTQPLADC…VNPLGEASVD (85 aa)). A disulfide bond links Cys282 and Cys333. An Omega-N-methylarginine modification is found at Arg321.

This sequence belongs to the immunoglobulin superfamily. MyBP family. As to expression, expressed in heart, with higher expression in the atria. Expressed in left atrium and ventricle, arteria mammaria interna and skeletal muscle. In terms of tissue distribution, expressed specifically en the left atrium.

It is found in the cytoplasm. Its subcellular location is the myofibril. The protein localises to the sarcomere. In terms of biological role, myosin-binding protein which plays a role in cardiac function. Seems to regulate conduction in the atria and ventricular conduction systems. The polypeptide is Myosin-binding protein H-like (Homo sapiens (Human)).